Reading from the N-terminus, the 67-residue chain is MAMSTNRIGGAIDKGVGAAKEAVGKATGNARLQVEGAAQKAKGDLQNKVGKAQDKARRRDQALNARL.

Residues 37–67 (AAQKAKGDLQNKVGKAQDKARRRDQALNARL) are disordered. Basic and acidic residues predominate over residues 41–61 (AKGDLQNKVGKAQDKARRRDQ).

It belongs to the UPF0337 (CsbD) family.

This chain is UPF0337 protein CC_0938, found in Caulobacter vibrioides (strain ATCC 19089 / CIP 103742 / CB 15) (Caulobacter crescentus).